Reading from the N-terminus, the 286-residue chain is Polyamine aminopropyltransferase 1 (286 aa).

The PABS domain maps to 1–235 (MSDYQETLYQ…GAMTFAWGST (235 aa)). Residue Q30 participates in S-methyl-5'-thioadenosine binding. 2 residues coordinate spermidine: H61 and D85. S-methyl-5'-thioadenosine contacts are provided by residues E105 and 137 to 138 (DG). Residue D155 is the Proton acceptor of the active site. 155 to 158 (DSTD) is a spermidine binding site. P162 contributes to the S-methyl-5'-thioadenosine binding site.

The protein belongs to the spermidine/spermine synthase family. In terms of assembly, homodimer or homotetramer.

Its subcellular location is the cytoplasm. It carries out the reaction S-adenosyl 3-(methylsulfanyl)propylamine + putrescine = S-methyl-5'-thioadenosine + spermidine + H(+). It participates in amine and polyamine biosynthesis; spermidine biosynthesis; spermidine from putrescine: step 1/1. Catalyzes the irreversible transfer of a propylamine group from the amino donor S-adenosylmethioninamine (decarboxy-AdoMet) to putrescine (1,4-diaminobutane) to yield spermidine. The sequence is that of Polyamine aminopropyltransferase 1 from Pseudomonas aeruginosa (strain ATCC 15692 / DSM 22644 / CIP 104116 / JCM 14847 / LMG 12228 / 1C / PRS 101 / PAO1).